Reading from the N-terminus, the 358-residue chain is Mitogen-activated protein kinase 1 (358 aa).

Position 2 is an N-acetylalanine (A2). The Protein kinase domain occupies 23-311 (YTNLSYIGEG…VEQALAHPYL (289 aa)). S27 carries the phosphoserine; by SGK1 modification. Residues 29–37 (IGEGAYGMV) and K52 each bind ATP. Residue D147 is the Proton acceptor of the active site. Position 183 is a phosphothreonine; by MAP2K1 and MAP2K2 (T183). A TXY motif is present at residues 183 to 185 (TEY). Y185 is modified (phosphotyrosine; by MAP2K1 and MAP2K2). T188 is subject to Phosphothreonine; by autocatalysis. 3 positions are modified to phosphoserine: S244, S246, and S282.

Belongs to the protein kinase superfamily. CMGC Ser/Thr protein kinase family. MAP kinase subfamily. As to quaternary structure, binds both upstream activators and downstream substrates in multimolecular complexes. This interaction inhibits its tyrosine-kinase activity. Interacts with ADAM15, ARHGEF2, ARRB2, DAPK1 (via death domain), HSF4, IER3, IPO7, NISCH, SGK1, and isoform 1 of NEK2. Interacts (via phosphorylated form) with TPR (via C-terminal region and phosphorylated form); the interaction requires dimerization of MAPK1/ERK2 and increases following EGF stimulation. Interacts with MAP2K1. Interacts with DUSP6. Interacts (phosphorylated form) with CAV2 ('Tyr-19'-phosphorylated form); the interaction, promoted by insulin, leads to nuclear location and MAPK1 activation. Interacts with DCC. Interacts with MORG1. Interacts with PEA15. Interacts with MKNK2. MKNK2 isoform 1 binding prevents from dephosphorylation and inactivation. The phosphorylated form interacts with PML. Interacts with STYX. Interacts with CDK2AP2. Interacts with CAVIN4. Interacts with DUSP7; the interaction enhances DUSP7 phosphatase activity. Interacts with GIT1; this interaction is necessary for MAPK1 localization to focal adhesions. Interacts with ZNF263. Interacts with phosphoglycerate kinase PGK1; the interaction is direct, occurs under hypoxic conditions, and promotes interaction between PGK1 and PIN1. It depends on Mg(2+) as a cofactor. Post-translationally, dually phosphorylated on Thr-183 and Tyr-185, which activates the enzyme. Ligand-activated ALK induces tyrosine phosphorylation. Dephosphorylated by PTPRJ at Tyr-185. Phosphorylated upon FLT3 and KIT signaling. Dephosphorylated by DUSP1 and DUSP2 at Thr-183 and Tyr-185. In terms of processing, ISGylated. Ubiquitinated by TRIM15 via 'Lys-63'-linked ubiquitination; leading to activation. Deubiquitinated by CYLD. As to expression, widely expressed.

It is found in the cytoplasm. It localises to the cytoskeleton. The protein resides in the spindle. The protein localises to the nucleus. Its subcellular location is the microtubule organizing center. It is found in the centrosome. It localises to the membrane. The protein resides in the caveola. The protein localises to the cell junction. Its subcellular location is the focal adhesion. The catalysed reaction is L-seryl-[protein] + ATP = O-phospho-L-seryl-[protein] + ADP + H(+). It catalyses the reaction L-threonyl-[protein] + ATP = O-phospho-L-threonyl-[protein] + ADP + H(+). Its activity is regulated as follows. Phosphorylated by MAP2K1/MEK1 and MAP2K2/MEK2 on Thr-183 and Tyr-185 in response to external stimuli like insulin or NGF. Both phosphorylations are required for activity. This phosphorylation causes dramatic conformational changes, which enable full activation and interaction of MAPK1/ERK2 with its substrates. Phosphorylation on Ser-27 by SGK1 results in its activation by enhancing its interaction with MAP2K1/MEK1 and MAP2K2/MEK2. Dephosphorylated and inactivated by DUSP1, DUSP3, DUSP6 and DUSP9. Inactivated by pyrimidylpyrrole inhibitors. Functionally, serine/threonine kinase which acts as an essential component of the MAP kinase signal transduction pathway. MAPK1/ERK2 and MAPK3/ERK1 are the 2 MAPKs which play an important role in the MAPK/ERK cascade. They participate also in a signaling cascade initiated by activated KIT and KITLG/SCF. Depending on the cellular context, the MAPK/ERK cascade mediates diverse biological functions such as cell growth, adhesion, survival and differentiation through the regulation of transcription, translation, cytoskeletal rearrangements. The MAPK/ERK cascade also plays a role in initiation and regulation of meiosis, mitosis, and postmitotic functions in differentiated cells by phosphorylating a number of transcription factors. About 160 substrates have already been discovered for ERKs. Many of these substrates are localized in the nucleus, and seem to participate in the regulation of transcription upon stimulation. However, other substrates are found in the cytosol as well as in other cellular organelles, and those are responsible for processes such as translation, mitosis and apoptosis. Moreover, the MAPK/ERK cascade is also involved in the regulation of the endosomal dynamics, including lysosome processing and endosome cycling through the perinuclear recycling compartment (PNRC); as well as in the fragmentation of the Golgi apparatus during mitosis. The substrates include transcription factors (such as ATF2, BCL6, ELK1, ERF, FOS, HSF4 or SPZ1), cytoskeletal elements (such as CANX, CTTN, GJA1, MAP2, MAPT, PXN, SORBS3 or STMN1), regulators of apoptosis (such as BAD, BTG2, CASP9, DAPK1, IER3, MCL1 or PPARG), regulators of translation (such as EIF4EBP1 and FXR1) and a variety of other signaling-related molecules (like ARHGEF2, DCC, FRS2 or GRB10). Protein kinases (such as RAF1, RPS6KA1/RSK1, RPS6KA3/RSK2, RPS6KA2/RSK3, RPS6KA6/RSK4, SYK, MKNK1/MNK1, MKNK2/MNK2, RPS6KA5/MSK1, RPS6KA4/MSK2, MAPKAPK3 or MAPKAPK5) and phosphatases (such as DUSP1, DUSP4, DUSP6 or DUSP16) are other substrates which enable the propagation the MAPK/ERK signal to additional cytosolic and nuclear targets, thereby extending the specificity of the cascade. Mediates phosphorylation of TPR in response to EGF stimulation. May play a role in the spindle assembly checkpoint. Phosphorylates PML and promotes its interaction with PIN1, leading to PML degradation. Phosphorylates CDK2AP2. Phosphorylates phosphoglycerate kinase PGK1 under hypoxic conditions to promote its targeting to the mitochondrion and suppress the formation of acetyl-coenzyme A from pyruvate. Acts as a transcriptional repressor. Binds to a [GC]AAA[GC] consensus sequence. Repress the expression of interferon gamma-induced genes. Seems to bind to the promoter of CCL5, DMP1, IFIH1, IFITM1, IRF7, IRF9, LAMP3, OAS1, OAS2, OAS3 and STAT1. Transcriptional activity is independent of kinase activity. The chain is Mitogen-activated protein kinase 1 from Mus musculus (Mouse).